Here is a 20-residue protein sequence, read N- to C-terminus: T cell receptor alpha joining 3 (20 aa).

Alpha-beta TR is a heterodimer composed of an alpha and beta chain; disulfide-linked. The alpha-beta TR is associated with the transmembrane signaling CD3 coreceptor proteins to form the TR-CD3 (TcR or TCR). The assembly of alpha-beta TR heterodimers with CD3 occurs in the endoplasmic reticulum where a single alpha-beta TR heterodimer associates with one CD3D-CD3E heterodimer, one CD3G-CD3E heterodimer and one CD247 homodimer forming a stable octameric structure. CD3D-CD3E and CD3G-CD3E heterodimers preferentially associate with TR alpha and TR beta chains, respectively. The association of the CD247 homodimer is the last step of TcR assembly in the endoplasmic reticulum and is required for transport to the cell surface.

It is found in the cell membrane. Functionally, j region of the variable domain of T cell receptor (TR) alpha chain that participates in the antigen recognition. Alpha-beta T cell receptors are antigen specific receptors which are essential to the immune response and are present on the cell surface of T lymphocytes. Recognize peptide-major histocompatibility (MH) (pMH) complexes that are displayed by antigen presenting cells (APC), a prerequisite for efficient T cell adaptive immunity against pathogens. Binding of alpha-beta TR to pMH complex initiates TR-CD3 clustering on the cell surface and intracellular activation of LCK that phosphorylates the ITAM motifs of CD3G, CD3D, CD3E and CD247 enabling the recruitment of ZAP70. In turn ZAP70 phosphorylates LAT, which recruits numerous signaling molecules to form the LAT signalosome. The LAT signalosome propagates signal branching to three major signaling pathways, the calcium, the mitogen-activated protein kinase (MAPK) kinase and the nuclear factor NF-kappa-B (NF-kB) pathways, leading to the mobilization of transcription factors that are critical for gene expression and essential for T cell growth and differentiation. The T cell repertoire is generated in the thymus, by V-(D)-J rearrangement. This repertoire is then shaped by intrathymic selection events to generate a peripheral T cell pool of self-MH restricted, non-autoaggressive T cells. Post-thymic interaction of alpha-beta TR with the pMH complexes shapes TR structural and functional avidity. This Homo sapiens (Human) protein is T cell receptor alpha joining 3.